Consider the following 586-residue polypeptide: A-type ATP synthase subunit A (586 aa).

Residue 233 to 240 (GPFGSGKT) coordinates ATP.

Belongs to the ATPase alpha/beta chains family. Has multiple subunits with at least A(3), B(3), C, D, E, F, H, I and proteolipid K(x).

The protein localises to the cell membrane. It catalyses the reaction ATP + H2O + 4 H(+)(in) = ADP + phosphate + 5 H(+)(out). Functionally, component of the A-type ATP synthase that produces ATP from ADP in the presence of a proton gradient across the membrane. The A chain is the catalytic subunit. The polypeptide is A-type ATP synthase subunit A (Methanococcus aeolicus (strain ATCC BAA-1280 / DSM 17508 / OCM 812 / Nankai-3)).